The chain runs to 474 residues: ABHD16B (474 aa).

In terms of domain architecture, AB hydrolase-1 spans 175 to 293 (VICCEGNAGF…MPQSWKGLVV (119 aa)). Active-site charge relay system residues include serine 248, aspartate 323, and histidine 423.

The protein belongs to the AB hydrolase superfamily. ABHD16 family.

The catalysed reaction is a 1,2-diacyl-sn-glycero-3-phospho-L-serine + H2O = a 2-acyl-sn-glycero-3-phospho-L-serine + a fatty acid + H(+). It carries out the reaction a 1-acylglycerol + H2O = glycerol + a fatty acid + H(+). It catalyses the reaction 1-(9Z-octadecenoyl)-glycerol + H2O = glycerol + (9Z)-octadecenoate + H(+). Its function is as follows. Hydrolyzes the sn-1 position of glycerophospholipids with high specificity towards phosphatidylserine (PS), PS-PLA1 enzyme. Also hydrolyzes the acyl chain of glycerolipids with a preference for the monoacylglycerol (MAG) 1-acylglycerol, MAG lipase. Plays a regulatory role in cellular lipid homeostasis by modulating genes involved in neutral lipid degradation and in phospholipid synthesis and composition. This is ABHD16B from Rattus norvegicus (Rat).